We begin with the raw amino-acid sequence, 362 residues long: 3-dehydroquinate synthase (362 aa).

NAD(+) is bound by residues aspartate 74–lysine 79, glycine 108–aspartate 112, threonine 132–threonine 133, lysine 145, lysine 154, and threonine 172–threonine 175. 3 residues coordinate Zn(2+): glutamate 187, histidine 250, and histidine 267.

Belongs to the sugar phosphate cyclases superfamily. Dehydroquinate synthase family. It depends on Co(2+) as a cofactor. Zn(2+) is required as a cofactor. NAD(+) serves as cofactor.

The protein localises to the cytoplasm. It carries out the reaction 7-phospho-2-dehydro-3-deoxy-D-arabino-heptonate = 3-dehydroquinate + phosphate. Its pathway is metabolic intermediate biosynthesis; chorismate biosynthesis; chorismate from D-erythrose 4-phosphate and phosphoenolpyruvate: step 2/7. Catalyzes the conversion of 3-deoxy-D-arabino-heptulosonate 7-phosphate (DAHP) to dehydroquinate (DHQ). This is 3-dehydroquinate synthase from Citrifermentans bemidjiense (strain ATCC BAA-1014 / DSM 16622 / JCM 12645 / Bem) (Geobacter bemidjiensis).